Here is a 241-residue protein sequence, read N- to C-terminus: MSMLFYTLITAFLIGIQAEPHSESNVPAGHTIPQAHWTKLQHSLDTALRRARSTPAAAIAARVAGQTCNITVDPRLFKKRRLRSPRVLFSTQPPPEAADTQDLDFEVGGAAPFNRTHRSKRSSSHPIFHRGEFSVCDSVSVWVGDKTTATDIKGKEVMVLGEVNINNSVFKQYFFETKCRDPNPVDSGCRGIDSKHWNSYCTTTHTFVKALTMDGKQAAWRFIRIDTACVCVLSRKAVRRA.

Residues 1 to 18 form the signal peptide; that stretch reads MSMLFYTLITAFLIGIQA. A propeptide spanning residues 19–121 is cleaved from the precursor; it reads EPHSESNVPA…PFNRTHRSKR (103 aa). N-linked (GlcNAc...) asparagine glycans are attached at residues asparagine 69, asparagine 114, and asparagine 166. Intrachain disulfides connect cysteine 136-cysteine 201, cysteine 179-cysteine 229, and cysteine 189-cysteine 231.

This sequence belongs to the NGF-beta family. Homodimer. The homodimer interacts with a single NTRK1 chain. The homodimer interacts with a single NGFR chain. The NGF dimer interacts with a single SORCS2 chain (via extracellular domain). The NGF precursor (proNGF) binds to a receptor complex formed by SORT1 and NGFR, which leads to NGF endocytosis. Both mature NGF and the immature NGF precursor (proNGF) interact with SORCS2 and with the heterodimer formed by SORCS2 and NGFR (via extracellular domains). The NGF precursor (proNGF) has much higher affinity for SORCS2 than mature NGF. The NGF precursor (proNGF) has much higher affinity for SORT1 than mature NGF. Interacts with ADAM10 in a divalent cation-dependent manner. Interacts with SORCS3.

The protein localises to the secreted. The protein resides in the endosome lumen. Nerve growth factor is important for the development and maintenance of the sympathetic and sensory nervous systems. Extracellular ligand for the NTRK1 and NGFR receptors, activates cellular signaling cascades through those receptor tyrosine kinase to regulate neuronal proliferation, differentiation and survival. Inhibits metalloproteinase dependent proteolysis of platelet glycoprotein VI. In Pongo pygmaeus (Bornean orangutan), this protein is Beta-nerve growth factor (NGF).